The chain runs to 510 residues: Lysine--tRNA ligase (510 aa).

Mg(2+) is bound by residues Glu-420 and Glu-427.

The protein belongs to the class-II aminoacyl-tRNA synthetase family. In terms of assembly, homodimer. Requires Mg(2+) as cofactor.

Its subcellular location is the cytoplasm. It catalyses the reaction tRNA(Lys) + L-lysine + ATP = L-lysyl-tRNA(Lys) + AMP + diphosphate. The chain is Lysine--tRNA ligase from Vibrio vulnificus (strain CMCP6).